The following is a 338-amino-acid chain: MLYDIARPFLFSLDAETAHEFTLAALNLAGRTLPAGKPEAADAVRVMGIDFPNRIGLAAGLDKNGEAIDGLARLGFGFIEIGTITPRPQPGNPRPRLFRLPEVRGIINRMGFNNHGVDTLVANVKAARFKGVLGINIGKNFDTPIENAADDYLACLDKVYPLASYVTVNISSPNTKNLRQLQGESELDDLLGRLKSAQQRLADQHGRYVPLTLKIAPDLEAAQITNIADALRRHRIDAVIATNTTISRDKVQGVRFAEQQGGLSGAPVFEASTAVVAQLATALGGELPIIAAGGVMDTRSARAKLEAGASLVQLYSGLIYRGPCLVRECVRATADFPR.

Residues Ala-59–Lys-63 and Thr-83 contribute to the FMN site. A substrate-binding site is contributed by Lys-63. Asn-108–Phe-112 serves as a coordination point for substrate. FMN is bound by residues Asn-136 and Asn-169. Asn-169 contacts substrate. Ser-172 acts as the Nucleophile in catalysis. Position 174 (Asn-174) interacts with substrate. The FMN site is built by Lys-214 and Thr-242. Asn-243–Thr-244 serves as a coordination point for substrate. Residues Gly-265, Gly-294, and Tyr-315–Ser-316 each bind FMN.

This sequence belongs to the dihydroorotate dehydrogenase family. Type 2 subfamily. In terms of assembly, monomer. FMN serves as cofactor.

It is found in the cell membrane. The enzyme catalyses (S)-dihydroorotate + a quinone = orotate + a quinol. Its pathway is pyrimidine metabolism; UMP biosynthesis via de novo pathway; orotate from (S)-dihydroorotate (quinone route): step 1/1. Its function is as follows. Catalyzes the conversion of dihydroorotate to orotate with quinone as electron acceptor. This chain is Dihydroorotate dehydrogenase (quinone), found in Azoarcus sp. (strain BH72).